A 318-amino-acid chain; its full sequence is NADH-ubiquinone oxidoreductase chain 1 (318 aa).

Transmembrane regions (helical) follow at residues 2–22 (FMIN…FLTL), 70–90 (MFIL…IPLP), 100–120 (LGVL…LWSG), 147–167 (AIIL…TLII), 172–192 (TWLI…TLAE), 222–242 (LFFM…AILF), 253–273 (ELYT…FLWI), and 294–314 (LPLT…TSGI).

It belongs to the complex I subunit 1 family. As to quaternary structure, core subunit of respiratory chain NADH dehydrogenase (Complex I) which is composed of 45 different subunits.

It is found in the mitochondrion inner membrane. The enzyme catalyses a ubiquinone + NADH + 5 H(+)(in) = a ubiquinol + NAD(+) + 4 H(+)(out). In terms of biological role, core subunit of the mitochondrial membrane respiratory chain NADH dehydrogenase (Complex I) which catalyzes electron transfer from NADH through the respiratory chain, using ubiquinone as an electron acceptor. Essential for the catalytic activity and assembly of complex I. In Bos mutus grunniens (Wild yak), this protein is NADH-ubiquinone oxidoreductase chain 1 (MT-ND1).